We begin with the raw amino-acid sequence, 535 residues long: Pre-mRNA-splicing factor SLU7-A (535 aa).

The segment at 21–44 (EEARKAGLAPAEVDEDGKEINPHI) is disordered. Residues 96-109 (CQNCGAMTHTAKAC) form a CCHC-type zinc finger. Residues 176–190 (LKKLEEKNNNEKGDD) show a composition bias toward basic and acidic residues. 2 disordered regions span residues 176-204 (LKKL…DLRV) and 489-508 (EDLS…NVKY). Positions 191–203 (ANSDGEEDEDDLR) are enriched in acidic residues. Ser193 carries the post-translational modification Phosphoserine. A Nuclear localization signal motif is present at residues 486–493 (LKKEDLSR). A compositionally biased stretch (basic and acidic residues) spans 489–501 (EDLSRREEKDERK).

This sequence belongs to the SLU7 family. In terms of tissue distribution, mainly expressed in tissues undergoing cell proliferation, particularly in lateral organs.

Its subcellular location is the nucleus. Participates in the second catalytic step of pre-mRNA splicing, when the free hydroxyl group of exon I attacks the 3'-splice site to generate spliced mRNA and the excised lariat intron. Together with SMP2, involved in the timing of cell cycle arrest during leaf development, in a STRUWWELPETER (SWP) dependent manner; promotes cell proliferation in developing organs. This Arabidopsis thaliana (Mouse-ear cress) protein is Pre-mRNA-splicing factor SLU7-A.